The sequence spans 192 residues: Cytidylate kinase (192 aa).

Position 7–15 (7–15) interacts with ATP; sequence GPPGAGKST.

The protein belongs to the cytidylate kinase family. Type 2 subfamily.

The protein localises to the cytoplasm. It carries out the reaction CMP + ATP = CDP + ADP. It catalyses the reaction dCMP + ATP = dCDP + ADP. This is Cytidylate kinase from Haloquadratum walsbyi (strain DSM 16790 / HBSQ001).